The primary structure comprises 402 residues: MNYSTENVSSAALRKRKTLKKSINFSIMIIGESGSGRSTLINTLCGGNSIVPTSSTATQDPFTKKLTLRHENVELEDNEGHKISLNIIDTPNFANSINCDDDFKIIVDFIRHQFDEVLLEESRVKRNPRFKDGRIHVLIYMINPTGHGLSDIDVKFLQHVNNLVNIIPIISKADSLTPKELKLNKELILEDLNNYGINFYKFNEYDYEQDYIDEEIIEYNKYLNSLIPFAIIGANEYRSNPNGSEDEDDILKLRILNKDFKPIDIDNAEINDFTILKNVLLVTHLNEFKDITHDSIYENYRTEALSGKQFQYVNKDSAKQEISESDYLMKEEQIKLEEERLRKFEERVHQDLINKRKELLERENELKEIEKRLLAEGLKFDENGDVVKVHEEESSENEVKVI.

At Met1 the chain carries N-acetylmethionine. Ser4 is modified (phosphoserine). A Basic motif motif is present at residues 14-21 (RKRKTLKK). Residues 21–307 (KSINFSIMII…ENYRTEALSG (287 aa)) form the Septin-type G domain. The interval 31–38 (GESGSGRS) is G1 motif. Residue 31 to 38 (GESGSGRS) coordinates GTP. Residues 89–92 (DTPN) are G3 motif. The G4 motif stretch occupies residues 171-174 (SKAD). GTP-binding positions include 172 to 180 (KADSLTPKE) and Gly233. The stretch at 318–376 (AKQEISESDYLMKEEQIKLEEERLRKFEERVHQDLINKRKELLERENELKEIEKRLLAE) forms a coiled coil. Ser394 is subject to Phosphoserine; by CDC28. Phosphoserine; by GIN4 is present on Ser395.

Belongs to the TRAFAC class TrmE-Era-EngA-EngB-Septin-like GTPase superfamily. Septin GTPase family. Component of the septin complex which consists of CDC3, CDC10, CDC11, CDC12 and probably SEP7. The purified septin complex appeared to have a stoichiometry of 2 CDC3, 1 to 2 CDC10, 1 CDC11, 2 CDC12, and 1 or none SEP7 subunit. Interacts with HSL1. Post-translationally, hyphal induction causes immediate phosphorylation at Ser-395 by GIN4 and at Ser-394 by CDC28-CCN1. GIN4 phosphorylation at Ser-395 primes CDC11 for further phosphorylation by CDC28-CCN1. CDC28-HGC1 then maintains CDC11 phosphorylation throughout hyphal growth. Ser-4 is also phosphorylated in yeast cells but not hyphal cells. In terms of processing, met-1 is acetylated.

The protein localises to the bud neck. Functionally, septins are GTPases involved in cytokinesis that assemble early in the cell cycle as a patch at the incipient bud site and form a ring before bud emergence, which transforms into an hour-glass shaped collar of cortical filaments that spans both sides of the mother-bud neck. This collar persists until just before cytokinesis, when it splits into two rings that occupy opposite sides of the neck. The septins at the bud neck serve as a structural scaffold that recruits different components involved in diverse processes at specific stages during the cell cycle. Many proteins bind asymmetrically to the septin collar. The septin assembly is regulated by protein kinase GIN4. Septins are also involved in cell morphogenesis, chlamydospores morphogenesis, bud site selection, chitin deposition, cell cycle regulation, cell compartmentalization, and spore wall formation. CDC11 is required for the correct localization of SEC3 at bud tips and bud necks. Plays a key role in invasive growth and virulence. This chain is Septin CDC11 (CDC11), found in Candida albicans (strain SC5314 / ATCC MYA-2876) (Yeast).